The chain runs to 326 residues: Myeloid protein 1 (326 aa).

A signal peptide spans 1–18; sequence MPALSLIALLSLVSTAFA. A run of 2 repeats spans residues 28 to 162 and 177 to 312. Disulfide bonds link Cys37/Cys74, Cys48/Cys53, and Cys113/Cys156. Residues His67, Asp71, and His152 each coordinate Zn(2+). The disordered stretch occupies residues 307–326; sequence DRSDPTSNLERGKGESEMEV.

It belongs to the LECT2/MIM-1 family. Substrate for arginine-specific ADP-ribosyltransferase.

It is found in the cytoplasmic granule. The chain is Myeloid protein 1 (MIM1) from Gallus gallus (Chicken).